Here is a 314-residue protein sequence, read N- to C-terminus: 4-hydroxy-3-methylbut-2-enyl diphosphate reductase (314 aa).

Position 12 (Cys12) interacts with [4Fe-4S] cluster. Residues His41 and His74 each coordinate (2E)-4-hydroxy-3-methylbut-2-enyl diphosphate. His41 and His74 together coordinate dimethylallyl diphosphate. Isopentenyl diphosphate contacts are provided by His41 and His74. [4Fe-4S] cluster is bound at residue Cys96. A (2E)-4-hydroxy-3-methylbut-2-enyl diphosphate-binding site is contributed by His124. Position 124 (His124) interacts with dimethylallyl diphosphate. His124 contributes to the isopentenyl diphosphate binding site. The active-site Proton donor is the Glu126. Thr167 serves as a coordination point for (2E)-4-hydroxy-3-methylbut-2-enyl diphosphate. Cys197 contacts [4Fe-4S] cluster. (2E)-4-hydroxy-3-methylbut-2-enyl diphosphate-binding residues include Ser225, Ser226, Asn227, and Ser269. Dimethylallyl diphosphate-binding residues include Ser225, Ser226, Asn227, and Ser269. Isopentenyl diphosphate-binding residues include Ser225, Ser226, Asn227, and Ser269.

The protein belongs to the IspH family. [4Fe-4S] cluster is required as a cofactor.

The catalysed reaction is isopentenyl diphosphate + 2 oxidized [2Fe-2S]-[ferredoxin] + H2O = (2E)-4-hydroxy-3-methylbut-2-enyl diphosphate + 2 reduced [2Fe-2S]-[ferredoxin] + 2 H(+). It carries out the reaction dimethylallyl diphosphate + 2 oxidized [2Fe-2S]-[ferredoxin] + H2O = (2E)-4-hydroxy-3-methylbut-2-enyl diphosphate + 2 reduced [2Fe-2S]-[ferredoxin] + 2 H(+). It functions in the pathway isoprenoid biosynthesis; dimethylallyl diphosphate biosynthesis; dimethylallyl diphosphate from (2E)-4-hydroxy-3-methylbutenyl diphosphate: step 1/1. It participates in isoprenoid biosynthesis; isopentenyl diphosphate biosynthesis via DXP pathway; isopentenyl diphosphate from 1-deoxy-D-xylulose 5-phosphate: step 6/6. Functionally, catalyzes the conversion of 1-hydroxy-2-methyl-2-(E)-butenyl 4-diphosphate (HMBPP) into a mixture of isopentenyl diphosphate (IPP) and dimethylallyl diphosphate (DMAPP). Acts in the terminal step of the DOXP/MEP pathway for isoprenoid precursor biosynthesis. In Aliivibrio salmonicida (strain LFI1238) (Vibrio salmonicida (strain LFI1238)), this protein is 4-hydroxy-3-methylbut-2-enyl diphosphate reductase.